Here is a 212-residue protein sequence, read N- to C-terminus: Adenylate kinase (212 aa).

10–15 (GAGKGT) is a binding site for ATP. The interval 30–59 (STGDMFRAAMANQTEMGVLAKSYIDKGELV) is NMP. Residues Thr31, Arg36, 57-59 (ELV), 86-89 (GYPR), and Gln93 contribute to the AMP site. The LID stretch occupies residues 127–159 (GRIIHRVTGETFHKVFNPPVDYKEEDYYQREDD). ATP is bound by residues Arg128 and 137 to 138 (TF). Arg156 and Arg167 together coordinate AMP. Residue Gln195 participates in ATP binding.

It belongs to the adenylate kinase family. Monomer.

The protein resides in the cytoplasm. The enzyme catalyses AMP + ATP = 2 ADP. The protein operates within purine metabolism; AMP biosynthesis via salvage pathway; AMP from ADP: step 1/1. Functionally, catalyzes the reversible transfer of the terminal phosphate group between ATP and AMP. Plays an important role in cellular energy homeostasis and in adenine nucleotide metabolism. This Streptococcus pneumoniae (strain JJA) protein is Adenylate kinase.